A 196-amino-acid polypeptide reads, in one-letter code: UPF0316 protein LBL_2483 (196 aa).

3 helical membrane passes run 12 to 32 (YCVLPCFIFLARVTDVSIGTI), 44 to 64 (IAASLGFLEVLLWVIVITQVI), and 70 to 90 (ALCYLAYAGGFAAGTFIGMIL).

This sequence belongs to the UPF0316 family.

It localises to the cell membrane. The chain is UPF0316 protein LBL_2483 from Leptospira borgpetersenii serovar Hardjo-bovis (strain L550).